The following is a 251-amino-acid chain: Proteasome subunit alpha type-4-like (251 aa).

The protein belongs to the peptidase T1A family. The 26S proteasome consists of a 20S proteasome core and two 19S regulatory subunits. The 20S proteasome core is composed of 28 subunits that are arranged in four stacked rings, resulting in a barrel-shaped structure. The two end rings are each formed by seven alpha subunits, and the two central rings are each formed by seven beta subunits. The catalytic chamber with the active sites is on the inside of the barrel. In terms of tissue distribution, testis, prominent after meiosis II. After meiosis, predominantly localized to the haploid spermatid nuclei of the 64-cell cysts, remaining during the elongation and condensation of the spermatid nuclei. In mature, motile sperm, expression is seen exclusively in the sperm head.

Its subcellular location is the nucleus. Functionally, the proteasome is a multicatalytic proteinase complex which is characterized by its ability to cleave peptides with Arg, Phe, Tyr, Leu, and Glu adjacent to the leaving group at neutral or slightly basic pH. The proteasome has an ATP-dependent proteolytic activity. The protein is Proteasome subunit alpha type-4-like (Prosalpha3T) of Drosophila melanogaster (Fruit fly).